Consider the following 1386-residue polypeptide: DNA-directed RNA polymerase subunit beta'' (1386 aa).

4 residues coordinate Zn(2+): cysteine 220, cysteine 289, cysteine 296, and cysteine 299.

The protein belongs to the RNA polymerase beta' chain family. RpoC2 subfamily. In terms of assembly, in plastids the minimal PEP RNA polymerase catalytic core is composed of four subunits: alpha, beta, beta', and beta''. When a (nuclear-encoded) sigma factor is associated with the core the holoenzyme is formed, which can initiate transcription. The cofactor is Zn(2+).

Its subcellular location is the plastid. It localises to the chloroplast. The enzyme catalyses RNA(n) + a ribonucleoside 5'-triphosphate = RNA(n+1) + diphosphate. DNA-dependent RNA polymerase catalyzes the transcription of DNA into RNA using the four ribonucleoside triphosphates as substrates. The sequence is that of DNA-directed RNA polymerase subunit beta'' from Marchantia polymorpha (Common liverwort).